The primary structure comprises 274 residues: Serine/threonine-protein kinase 1 (274 aa).

The Protein kinase domain maps to 17-265 (ARTALHLVNG…YEVIQKNTYW (249 aa)). Residues 23-31 (LVNGKFGKV) and lysine 46 each bind ATP. Residue aspartate 133 is the Proton acceptor of the active site.

This sequence belongs to the protein kinase superfamily. Ser/Thr protein kinase family.

The enzyme catalyses L-seryl-[protein] + ATP = O-phospho-L-seryl-[protein] + ADP + H(+). It carries out the reaction L-threonyl-[protein] + ATP = O-phospho-L-threonyl-[protein] + ADP + H(+). Its function is as follows. In vitro, can phosphorylate histone H1. This Lymantria dispar multicapsid nuclear polyhedrosis virus (LdMNPV) protein is Serine/threonine-protein kinase 1 (PK1).